The primary structure comprises 180 residues: UPF0227 protein Shew_1627 (180 aa).

It belongs to the UPF0227 family.

The polypeptide is UPF0227 protein Shew_1627 (Shewanella loihica (strain ATCC BAA-1088 / PV-4)).